The sequence spans 293 residues: MLPKRAYPVQDSNVHSQEKKIIAGNWKMNINHSQAVSYLQELNWRLIDNGHDFDSCEIAVFPPFTDLRSVQTLVASDDIQISYGAQDVSAFSDGAHTGQISAQFLKDLDCKYVLIGHSEQRCLPCYPGNNSAINELNNKHDGLIANKLLRSFAAGICPILCIGDISPGDHFDATLSRFRSVLSHLKAISDKKHSIGYALGSKTHFLDSDQLHMLVAYEPSSAINSGNCANSGDIVRMAAAIKDIVNVRVLYGGGVNLFNASAVFNEDLLDGILVGRASLNASDFASLIKTCCL.

Substrate is bound at residue 25-27 (NWK). The Electrophile role is filled by H117. E218 (proton acceptor) is an active-site residue.

It belongs to the triosephosphate isomerase family. As to quaternary structure, homodimer.

It is found in the cytoplasm. It catalyses the reaction D-glyceraldehyde 3-phosphate = dihydroxyacetone phosphate. Its pathway is carbohydrate biosynthesis; gluconeogenesis. It participates in carbohydrate degradation; glycolysis; D-glyceraldehyde 3-phosphate from glycerone phosphate: step 1/1. Involved in the gluconeogenesis. Catalyzes stereospecifically the conversion of dihydroxyacetone phosphate (DHAP) to D-glyceraldehyde-3-phosphate (G3P). The protein is Triosephosphate isomerase of Tropheryma whipplei (strain Twist) (Whipple's bacillus).